Reading from the N-terminus, the 3061-residue chain is Genome polyprotein (3061 aa).

The region spanning 141–284 is the Peptidase S30 domain; the sequence is KLTEGQMNHL…QGVMDSMVQF (144 aa). Active-site for P1 proteinase activity residues include His192, Asp201, and Ser235. An Involved in interaction with stylet and aphid transmission motif is present at residues 334 to 337; sequence KITC. The Involved in virions binding and aphid transmission signature appears at 592–594; that stretch reads PTK. The region spanning 618-740 is the Peptidase C6 domain; the sequence is LYIARQGFCY…ESDIKHYRVG (123 aa). Catalysis depends on for helper component proteinase activity residues Cys626 and His699. Residues 1229 to 1381 form the Helicase ATP-binding domain; sequence DIAHSEHLDF…TQQPVKLIVE (153 aa). Residue 1242-1249 coordinates ATP; the sequence is GAVGSGKS. Residues 1331 to 1334 carry the DECH box motif; the sequence is DECH. Residues 1400 to 1559 enclose the Helicase C-terminal domain; that stretch reads DVVQFGSNVL…NLPVMTGGVS (160 aa). Positions 1884-1892 match the Nuclear localization signal motif; the sequence is RKKGKGKGT. Tyr1907 carries the O-(5'-phospho-RNA)-tyrosine modification. Residues 2032–2250 form the Peptidase C4 domain; sequence AKSLMRGLRD…VLWGPLKLKE (219 aa). Active-site for nuclear inclusion protein A activity residues include His2077, Asp2112, and Cys2182. Residues 2517–2641 form the RdRp catalytic domain; it reads WVYCDADGSQ…AVNPEKESIL (125 aa). The interval 2795-2835 is disordered; sequence GNDTIDAGGSTKKDAKQEQGSIQPNLNKEKEKDVNVGTSGT. Thr3044 is modified (phosphothreonine).

The protein belongs to the potyviridae genome polyprotein family. In terms of assembly, interacts with host eIF4E protein (via cap-binding region); this interaction mediates the translation of the VPg-viral RNA conjugates. Part of a complex that comprises VPg, RNA, host EIF4E and EIF4G; this interaction mediates the translation of the VPg-viral RNA conjugates. VPg is uridylylated by the polymerase and is covalently attached to the 5'-end of the genomic RNA. This uridylylated form acts as a nucleotide-peptide primer for the polymerase. Post-translationally, potyviral RNA is expressed as two polyproteins which undergo post-translational proteolytic processing. Genome polyprotein is processed by NIa-pro, P1 and HC-pro proteinases resulting in the production of at least ten individual proteins. P3N-PIPO polyprotein is cleaved by P1 and HC-pro proteinases resulting in the production of three individual proteins. The P1 proteinase and the HC-pro cleave only their respective C-termini autocatalytically. 6K1 is essential for proper proteolytic separation of P3 from CI.

Its subcellular location is the host cytoplasmic vesicle. The protein resides in the host nucleus. It is found in the virion. It catalyses the reaction RNA(n) + a ribonucleoside 5'-triphosphate = RNA(n+1) + diphosphate. The enzyme catalyses Hydrolyzes glutaminyl bonds, and activity is further restricted by preferences for the amino acids in P6 - P1' that vary with the species of potyvirus, e.g. Glu-Xaa-Xaa-Tyr-Xaa-Gln-|-(Ser or Gly) for the enzyme from tobacco etch virus. The natural substrate is the viral polyprotein, but other proteins and oligopeptides containing the appropriate consensus sequence are also cleaved.. It carries out the reaction Hydrolyzes a Gly-|-Gly bond at its own C-terminus, commonly in the sequence -Tyr-Xaa-Val-Gly-|-Gly, in the processing of the potyviral polyprotein.. Its function is as follows. Required for aphid transmission and also has proteolytic activity. Only cleaves a Gly-Gly dipeptide at its own C-terminus. Interacts with virions and aphid stylets. Acts as a suppressor of RNA-mediated gene silencing, also known as post-transcriptional gene silencing (PTGS), a mechanism of plant viral defense that limits the accumulation of viral RNAs. May have RNA-binding activity. Functionally, has helicase activity. It may be involved in replication. In terms of biological role, indispensable for virus replication. Reduces the abundance of host transcripts related to jasmonic acid biosynthesis therefore altering the host defenses. In order to increase its own stability, decreases host protein degradation pathways. Indispensable for virus replication. Its function is as follows. Mediates the cap-independent, EIF4E-dependent translation of viral genomic RNAs. Binds to the cap-binding site of host EIF4E and thus interferes with the host EIF4E-dependent mRNA export and translation. VPg-RNA directly binds EIF4E and is a template for transcription. Also forms trimeric complexes with EIF4E-EIF4G, which are templates for translation. Functionally, has RNA-binding and proteolytic activities. In terms of biological role, an RNA-dependent RNA polymerase that plays an essential role in the virus replication. Involved in aphid transmission, cell-to-cell and systemis movement, encapsidation of the viral RNA and in the regulation of viral RNA amplification. The polypeptide is Genome polyprotein (Potato virus Y (strain Hungarian) (PVY)).